A 154-amino-acid chain; its full sequence is Cyclin-dependent protein kinase inhibitor SMR14 (154 aa).

The segment at 1–111 (MSKIKIFHLF…RPPRKPKAIP (111 aa)) is disordered. Over residues 24 to 37 (SLLVPSKSDSLDSS) the composition is skewed to low complexity. Positions 74–83 (KWECKDEESP) are enriched in basic and acidic residues.

Its function is as follows. Probable cyclin-dependent protein kinase (CDK) inhibitor that functions as a repressor of mitosis in the endoreduplication cell cycle. This is Cyclin-dependent protein kinase inhibitor SMR14 from Arabidopsis thaliana (Mouse-ear cress).